The chain runs to 255 residues: High-affinity branched-chain amino acid transport ATP-binding protein LivG (255 aa).

Residues 6-254 form the ABC transporter domain; the sequence is LSVNGLMMRF…PDVIRAYLGE (249 aa). Residue 38-45 participates in ATP binding; it reads GPNGAGKT.

Belongs to the ABC transporter superfamily.

In terms of biological role, component of the leucine-specific transport system. This is High-affinity branched-chain amino acid transport ATP-binding protein LivG (livG) from Escherichia coli O157:H7.